Here is a 199-residue protein sequence, read N- to C-terminus: Lysine exporter LysE (199 aa).

5 helical membrane passes run 6–26 (VVGF…NAFV), 42–62 (LCTV…GALI), 68–88 (ALNV…LLAA), 144–164 (WLFG…LGFG), and 178–198 (WRIL…SLTV).

This sequence belongs to the LysE/ArgO transporter (TC 2.A.75) family.

It is found in the cell inner membrane. Its function is as follows. Catalyzes the efflux of L-lysine. This is Lysine exporter LysE from Mycobacterium bovis (strain ATCC BAA-935 / AF2122/97).